A 169-amino-acid polypeptide reads, in one-letter code: MFSSTFRRLAIRPLNRVTMVGAMHDIQVGFLDRCSVFQFTLTCTVLDFQKVAEPQPKSPGSLPSSTRTAPNPNGEEVEKHINKEQYTVRCLGSEAYTEALKNYLDDGCIVRVIGRLKTTEVVDAGKKQPFPCIIVEQGRWSTVSLVHSLRKQRRDWQLQNILTSVATLE.

The N-terminal 91 residues, 1-91 (MFSSTFRRLA…NKEQYTVRCL (91 aa)), are a transit peptide targeting the mitochondrion. The interval 54-76 (PQPKSPGSLPSSTRTAPNPNGEE) is disordered. Over residues 61 to 71 (SLPSSTRTAPN) the composition is skewed to polar residues.

It is found in the mitochondrion. This is an uncharacterized protein from Trypanosoma brucei brucei (strain 927/4 GUTat10.1).